Reading from the N-terminus, the 121-residue chain is Fluoride-specific ion channel FluC 3 (121 aa).

The next 4 helical transmembrane spans lie at 3-23 (VFLP…RYLL), 40-60 (FTIN…ALGG), 69-89 (VLAT…NEMV), and 101-121 (AAYL…GFLV). Glycine 76 and serine 79 together coordinate Na(+).

This sequence belongs to the fluoride channel Fluc/FEX (TC 1.A.43) family.

It localises to the cell membrane. The catalysed reaction is fluoride(in) = fluoride(out). With respect to regulation, na(+) is not transported, but it plays an essential structural role and its presence is essential for fluoride channel function. Its function is as follows. Fluoride-specific ion channel. Important for reducing fluoride concentration in the cell, thus reducing its toxicity. This is Fluoride-specific ion channel FluC 3 from Bifidobacterium longum (strain NCC 2705).